A 903-amino-acid polypeptide reads, in one-letter code: uncharacterized protein (903 aa).

This is an uncharacterized protein from Gallid herpesvirus 2 (strain Chicken/Md5/ATCC VR-987) (GaHV-2).